Here is an 86-residue protein sequence, read N- to C-terminus: Large ribosomal subunit protein bL31 (86 aa).

The interval 65–86 (YGMGSANSATSKEQKEEKDSNK) is disordered. Residues 76 to 86 (KEQKEEKDSNK) are compositionally biased toward basic and acidic residues.

Belongs to the bacterial ribosomal protein bL31 family. Type A subfamily. In terms of assembly, part of the 50S ribosomal subunit.

Binds the 23S rRNA. This chain is Large ribosomal subunit protein bL31, found in Prochlorococcus marinus (strain MIT 9312).